The chain runs to 90 residues: UPF0235 protein CPn_0497/CP_0257/CPj0497/CpB0517 (90 aa).

Belongs to the UPF0235 family.

This Chlamydia pneumoniae (Chlamydophila pneumoniae) protein is UPF0235 protein CPn_0497/CP_0257/CPj0497/CpB0517.